The following is a 154-amino-acid chain: Ribonuclease 8 (154 aa).

Residues 1–27 (MAPARAGCCPLLLLLLGLWVAEVLVRA) form the signal peptide. Catalysis depends on His-42, which acts as the Proton acceptor. Intrachain disulfides connect Cys-50-Cys-93, Cys-64-Cys-118, Cys-82-Cys-133, and Cys-89-Cys-96. Substrate is bound by residues 65 to 69 (KDLNT) and Lys-90. His-149 acts as the Proton donor in catalysis.

It belongs to the pancreatic ribonuclease family. As to expression, expressed prominently in the placenta and is not detected in any other tissues examined.

The protein resides in the secreted. In terms of biological role, has a low ribonuclease activity. In Homo sapiens (Human), this protein is Ribonuclease 8 (RNASE8).